The primary structure comprises 409 residues: uncharacterized protein (409 aa).

10 consecutive transmembrane segments (helical) span residues Ala-18 to Val-38, Gly-47 to Gly-67, Val-100 to Ile-120, Val-159 to Tyr-179, Ala-180 to Leu-200, Phe-232 to Leu-252, Gly-260 to Leu-280, Ile-302 to Gly-322, Gly-355 to Leu-375, and Ile-380 to Ala-400.

Its subcellular location is the cell membrane. This is an uncharacterized protein from Mycobacterium tuberculosis (strain CDC 1551 / Oshkosh).